Reading from the N-terminus, the 159-residue chain is NADH-quinone oxidoreductase subunit I (159 aa).

2 consecutive 4Fe-4S ferredoxin-type domains span residues 50 to 80 and 90 to 119; these read QRRY…IESE and KRYD…ETHI. Positions 60, 63, 66, 70, 99, 102, 105, and 109 each coordinate [4Fe-4S] cluster.

The protein belongs to the complex I 23 kDa subunit family. NDH-1 is composed of 14 different subunits. Subunits NuoA, H, J, K, L, M, N constitute the membrane sector of the complex. Requires [4Fe-4S] cluster as cofactor.

It is found in the cell inner membrane. The enzyme catalyses a quinone + NADH + 5 H(+)(in) = a quinol + NAD(+) + 4 H(+)(out). Functionally, NDH-1 shuttles electrons from NADH, via FMN and iron-sulfur (Fe-S) centers, to quinones in the respiratory chain. The immediate electron acceptor for the enzyme in this species is believed to be ubiquinone. Couples the redox reaction to proton translocation (for every two electrons transferred, four hydrogen ions are translocated across the cytoplasmic membrane), and thus conserves the redox energy in a proton gradient. This Neisseria meningitidis serogroup A / serotype 4A (strain DSM 15465 / Z2491) protein is NADH-quinone oxidoreductase subunit I.